A 196-amino-acid polypeptide reads, in one-letter code: SERTA domain-containing protein 3 (196 aa).

A disordered region spans residues Met1–Trp21. The 48-residue stretch at Leu26–Pro73 folds into the SERTA domain. The interval Thr104 to Val125 is disordered.

In terms of assembly, interacts with RPA2. As to quaternary structure, (Microbial infection) Interacts with influenza virus PA, PB1 and PB2,leading to inhibition of RdRp complex assembly. (Microbial infection) Interacts with zika virus capsid protein.

The protein localises to the nucleus. Antiviral interferon-stimulated protein that plays a role in innate immunity and in the suppression of viruses through different mechanisms. Plays a role in the late phase response of TLR-induced immune effector expression. During influenza infection, interacts with PB2, PB1, and PA to disrupt the formation of the viral RdRp complex. Inhibits zika virus by interacting with the capsid protein in the nucleolus and reducing its abundance through proteasomal degradation. Strong transcriptional coactivator. This chain is SERTA domain-containing protein 3 (SERTAD3), found in Homo sapiens (Human).